The primary structure comprises 689 residues: Glycine--tRNA ligase beta subunit (689 aa).

The protein belongs to the class-II aminoacyl-tRNA synthetase family. As to quaternary structure, tetramer of two alpha and two beta subunits.

The protein resides in the cytoplasm. The enzyme catalyses tRNA(Gly) + glycine + ATP = glycyl-tRNA(Gly) + AMP + diphosphate. The protein is Glycine--tRNA ligase beta subunit of Salmonella schwarzengrund (strain CVM19633).